We begin with the raw amino-acid sequence, 204 residues long: Small ribosomal subunit protein uS4 (204 aa).

Positions 20-46 (WGRPKSPINKREYGPGEHGQRRRKPSD) are disordered. The span at 28-38 (NKREYGPGEHG) shows a compositional bias: basic and acidic residues. Residues 93 to 156 (TRLDAVVYRM…RQMPLILEAL (64 aa)) enclose the S4 RNA-binding domain.

Belongs to the universal ribosomal protein uS4 family. In terms of assembly, part of the 30S ribosomal subunit. Contacts protein S5. The interaction surface between S4 and S5 is involved in control of translational fidelity.

In terms of biological role, one of the primary rRNA binding proteins, it binds directly to 16S rRNA where it nucleates assembly of the body of the 30S subunit. Its function is as follows. With S5 and S12 plays an important role in translational accuracy. In Rhodospirillum rubrum (strain ATCC 11170 / ATH 1.1.1 / DSM 467 / LMG 4362 / NCIMB 8255 / S1), this protein is Small ribosomal subunit protein uS4.